The sequence spans 765 residues: Putative ankyrin repeat protein L371 (765 aa).

9 ANK repeats span residues 60–89 (NGNY…RLDV), 93–122 (EGNS…KIIG), 132–161 (KGSV…NANY), 165–194 (DNVN…NLNA), 198–227 (QGST…DQNI), 232–261 (LDFY…NPNH), 265–295 (EGNT…RCRS), 322–353 (DGLT…NLNY), and 357–395 (TGNT…GKTV).

The sequence is that of Putative ankyrin repeat protein L371 from Acanthamoeba polyphaga mimivirus (APMV).